A 291-amino-acid chain; its full sequence is MSREITREELSAAGVQYGHQTKRWNPKMKSYIYGVKNKNHIIDLEKTITHLNAAQKLLEFLGSKQQKILFVGTKRSGKNAVKEAALRSGNFYINNRWLGGTLTNLKTILIRIKALWEIEEEEKKGRLSLRTKKEQIKILKEKAKLEKALGGIKQMHKLPAAIVVVDPKGDEIAVKEAKKLNIPVIAICDTNADPDMVDYVIPGNDDLQESVNLIINILVEAYAEGAQIKMNPSVLRTVAPKREPRQINRPVMSSENQAEQQTSVANENVQMTNEPVVQVAEVEKPSEPKAE.

The interval 241–270 (KREPRQINRPVMSSENQAEQQTSVANENVQ) is disordered. The segment covering 251-270 (VMSSENQAEQQTSVANENVQ) has biased composition (polar residues).

It belongs to the universal ribosomal protein uS2 family.

In Mycoplasma capricolum subsp. capricolum (strain California kid / ATCC 27343 / NCTC 10154), this protein is Small ribosomal subunit protein uS2.